We begin with the raw amino-acid sequence, 194 residues long: ATP-dependent Clp protease proteolytic subunit (194 aa).

Residue S98 is the Nucleophile of the active site. The active site involves H123.

Belongs to the peptidase S14 family. Fourteen ClpP subunits assemble into 2 heptameric rings which stack back to back to give a disk-like structure with a central cavity, resembling the structure of eukaryotic proteasomes.

Its subcellular location is the cytoplasm. It carries out the reaction Hydrolysis of proteins to small peptides in the presence of ATP and magnesium. alpha-casein is the usual test substrate. In the absence of ATP, only oligopeptides shorter than five residues are hydrolyzed (such as succinyl-Leu-Tyr-|-NHMec, and Leu-Tyr-Leu-|-Tyr-Trp, in which cleavage of the -Tyr-|-Leu- and -Tyr-|-Trp bonds also occurs).. Functionally, cleaves peptides in various proteins in a process that requires ATP hydrolysis. Has a chymotrypsin-like activity. Plays a major role in the degradation of misfolded proteins. This chain is ATP-dependent Clp protease proteolytic subunit, found in Clostridium botulinum (strain Hall / ATCC 3502 / NCTC 13319 / Type A).